The sequence spans 241 residues: Uracil-DNA glycosylase (241 aa).

Residue aspartate 71 is the Proton acceptor of the active site.

The protein belongs to the uracil-DNA glycosylase (UDG) superfamily. UNG family.

The protein resides in the cytoplasm. It carries out the reaction Hydrolyzes single-stranded DNA or mismatched double-stranded DNA and polynucleotides, releasing free uracil.. Functionally, excises uracil residues from the DNA which can arise as a result of misincorporation of dUMP residues by DNA polymerase or due to deamination of cytosine. This Xanthomonas axonopodis pv. citri (strain 306) protein is Uracil-DNA glycosylase.